The primary structure comprises 32 residues: Photosystem II reaction center protein T (32 aa).

A helical transmembrane segment spans residues 3-23 (ALVYTFLLVATLGIIFFAIFF).

This sequence belongs to the PsbT family. As to quaternary structure, PSII is composed of 1 copy each of membrane proteins PsbA, PsbB, PsbC, PsbD, PsbE, PsbF, PsbH, PsbI, PsbJ, PsbK, PsbL, PsbM, PsbT, PsbY, PsbZ, Psb30/Ycf12, at least 3 peripheral proteins of the oxygen-evolving complex and a large number of cofactors. It forms dimeric complexes.

The protein localises to the plastid. It is found in the chloroplast thylakoid membrane. In terms of biological role, found at the monomer-monomer interface of the photosystem II (PS II) dimer, plays a role in assembly and dimerization of PSII. PSII is a light-driven water plastoquinone oxidoreductase, using light energy to abstract electrons from H(2)O, generating a proton gradient subsequently used for ATP formation. In Psilotum nudum (Whisk fern), this protein is Photosystem II reaction center protein T.